The following is an 892-amino-acid chain: Alpha-actinin-1 (892 aa).

N-acetylmethionine is present on M1. The actin-binding stretch occupies residues 1–247 (MDHYDSQQTN…IMTYVSSFYH (247 aa)). A Phosphoserine modification is found at S6. Y12 bears the Phosphotyrosine; by FAK1 mark. Calponin-homology (CH) domains are found at residues 31–135 (KQQR…LRFA) and 144–250 (TSAK…HAFS). N6-acetyllysine is present on residues K95 and K195. 4 Spectrin repeats span residues 274–384 (QLME…WLLN), 394–499 (HLAE…ALER), 509–620 (QLYL…ALTE), and 630–733 (RLRK…EVEN). The tract at residues 274–733 (QLMEDYEKLA…IARTINEVEN (460 aa)) is interaction with DDN. S471 is subject to Phosphoserine. K676 bears the N6-acetyllysine mark. Phosphoserine is present on S677. 2 consecutive EF-hand domains span residues 746–781 (EQMN…LGYD) and 787–822 (QGEA…ETAD). Residues D759, D761, S763, T765, and E770 each contribute to the Ca(2+) site. S890 carries the post-translational modification Phosphoserine.

It belongs to the alpha-actinin family. In terms of assembly, homodimer; antiparallel. Interacts with MYOZ2, TTID and LPP. Interacts with DDN. Interacts with PSD. Interacts with MICALL2. Interacts with DNM2 and CTTN. Interacts with PDLIM1. Interacts with PDLIM2. Interacts with PDLIM4 (via PDZ domain). Interacts with IGSF8.

The protein resides in the cytoplasm. It localises to the cytoskeleton. It is found in the myofibril. The protein localises to the sarcomere. Its subcellular location is the z line. The protein resides in the cell membrane. It localises to the cell junction. It is found in the cell projection. The protein localises to the ruffle. Its function is as follows. F-actin cross-linking protein which is thought to anchor actin to a variety of intracellular structures. Association with IGSF8 regulates the immune synapse formation and is required for efficient T-cell activation. This is Alpha-actinin-1 (Actn1) from Rattus norvegicus (Rat).